The primary structure comprises 518 residues: MANVDMQTFDKIIVLDFGSQYNQLITRRIREFGVYSELLSHKLTAAQIKEMNPKGIIFSGGPNSVYDDGAFQIDPEIFELGIPILGICYGMQLMAHNLSGGKVESADNKEYGKAIITVKNQENVMFKDLPETQTVWMSHGDLVTQVPEGFEVTATSDNCPISAMANDAKKFYGLQFHTEVRNTEYGNDILRHFAFDVCQARSNWSMDDFIDMQIQKIRETVGDKKVLLGLSGGVDSSVVGVLLHKAIGNQLTSIFVDHGLLRKGEAEQVMDSLGGKFGLNIIKVDAKERFLNKLAGVSDPEKKRKIIGNEFIRVFDDESAKLEGIEFLAQGTLYTDIIESGTDTAQTIKSHHNVGGLPEDVQFKLIEPLNTLFKDEVRELGEKLGMPHELVWRQPFPGPGLGIRVIGEITEEKLEIVRDSDLILREEIAKHGLDKEIWQYFTVLPGIRSVGVMGDGRTYDYTVGIRAVTSIDGMTADFAQIPWDVLQEISVRIVNEVDHVNRVVYDITSKPPATIEWE.

The Glutamine amidotransferase type-1 domain occupies 11–203 (KIIVLDFGSQ…AFDVCQARSN (193 aa)). C88 (nucleophile) is an active-site residue. Catalysis depends on residues H177 and E179. Residues 204–393 (WSMDDFIDMQ…LGMPHELVWR (190 aa)) form the GMPS ATP-PPase domain. ATP is bound at residue 231–237 (SGGVDSS).

In terms of assembly, homodimer.

The enzyme catalyses XMP + L-glutamine + ATP + H2O = GMP + L-glutamate + AMP + diphosphate + 2 H(+). It participates in purine metabolism; GMP biosynthesis; GMP from XMP (L-Gln route): step 1/1. Catalyzes the synthesis of GMP from XMP. The chain is GMP synthase [glutamine-hydrolyzing] from Ligilactobacillus salivarius (strain UCC118) (Lactobacillus salivarius).